The following is a 406-amino-acid chain: Tyrosine--tRNA ligase (406 aa).

Residue Tyr-35 coordinates L-tyrosine. The 'HIGH' region motif lies at 40–49 (ATSASLHIGH). 2 residues coordinate L-tyrosine: Tyr-167 and Gln-171. The short motif at 227 to 231 (KMGKS) is the 'KMSKS' region element. Lys-230 lines the ATP pocket. The S4 RNA-binding domain maps to 341–405 (ILLVDLMVLA…IGKKKILRIV (65 aa)).

It belongs to the class-I aminoacyl-tRNA synthetase family. TyrS type 1 subfamily. Homodimer.

It localises to the cytoplasm. It carries out the reaction tRNA(Tyr) + L-tyrosine + ATP = L-tyrosyl-tRNA(Tyr) + AMP + diphosphate + H(+). In terms of biological role, catalyzes the attachment of tyrosine to tRNA(Tyr) in a two-step reaction: tyrosine is first activated by ATP to form Tyr-AMP and then transferred to the acceptor end of tRNA(Tyr). The sequence is that of Tyrosine--tRNA ligase from Borrelia duttonii (strain Ly).